The chain runs to 270 residues: Dehydrodolichyl diphosphate synthase (270 aa).

The protein belongs to the UPP synthase family.

The protein localises to the endoplasmic reticulum membrane. The protein operates within protein modification; protein glycosylation. Its function is as follows. Cis-prenyl transferase that adds multiple copies of isopentenyl pyrophosphate (IPP) to farnesyl pyrophosphate (FPP) to produce dehydrodolichyl diphosphate (Dedol-PP). The polypeptide is Dehydrodolichyl diphosphate synthase (RER2) (Encephalitozoon cuniculi (strain GB-M1) (Microsporidian parasite)).